Reading from the N-terminus, the 135-residue chain is Centromere protein S (135 aa).

A disordered region spans residues 103–135 (SLEQKEKKKKKSVSGGNVSRNSDMDTVVPESKD).

Belongs to the TAF9 family. CENP-S/MHF1 subfamily. As to quaternary structure, heterodimer with CENPX, sometimes called MHF; this interaction stabilizes both partners. MHF heterodimers can assemble to form tetrameric structures. MHF also coassemble with CENPT-CENPW heterodimers at centromeres to form the tetrameric CENP-T-W-S-X complex. Forms a discrete complex with FANCM and CENPX, called FANCM-MHF; this interaction, probably mediated by direct binding between CENPS and FANCM, leads to synergistic activation of double-stranded DNA binding and strongly stimulates FANCM-mediated DNA remodeling. Recruited by FANCM to the Fanconi anemia (FA) core complex, which consists of CENPS, CENPX, FANCA, FANCB, FANCC, FANCE, FANCF, FANCG, FANCL, FANCM, FAAP24 and FAAP100. The FA core complex associates with Bloom syndrome (BLM) complex, which consists of at least BLM, DNA topoisomerase 3-alpha (TOP3A), RMI1/BLAP75, RPA1/RPA70 and RPA2/RPA32. The super complex between FA and BLM is called BRAFT. Component of the CENPA-CAD complex, composed of CENPI, CENPK, CENPL, CENPO, CENPP, CENPQ, CENPR and CENPS. The CENPA-CAD complex is probably recruited on centromeres by the CENPA-NAC complex, at least composed of CENPA, CENPC, CENPH, CENPM, CENPN, CENPT and CENPU.

The protein localises to the nucleus. The protein resides in the chromosome. It localises to the centromere. It is found in the kinetochore. In terms of biological role, DNA-binding component of the Fanconi anemia (FA) core complex. Required for the normal activation of the FA pathway, leading to monoubiquitination of the FANCI-FANCD2 complex in response to DNA damage, cellular resistance to DNA cross-linking drugs, and prevention of chromosomal breakage. In complex with CENPX (MHF heterodimer), crucial cofactor for FANCM in both binding and ATP-dependent remodeling of DNA. Stabilizes FANCM. In complex with CENPX and FANCM (but not other FANC proteins), rapidly recruited to blocked forks and promotes gene conversion at blocked replication forks. In complex with CENPT, CENPW and CENPX (CENP-T-W-S-X heterotetramer), involved in the formation of a functional kinetochore outer plate, which is essential for kinetochore-microtubule attachment and faithful mitotic progression. As a component of MHF and CENP-T-W-S-X complexes, binds DNA and bends it to form a nucleosome-like structure. DNA-binding function is fulfilled in the presence of CENPX, with the following preference for DNA substates: Holliday junction &gt; double-stranded &gt; splay arm &gt; single-stranded. Does not bind DNA on its own. The sequence is that of Centromere protein S (cenps) from Xenopus laevis (African clawed frog).